The sequence spans 213 residues: StAR-related lipid transfer protein 5 (213 aa).

One can recognise an START domain in the interval 1–213 (MDPALAAQMS…LQKAVKQFHE (213 aa)).

May be involved in the intracellular transport of sterols or other lipids. May bind cholesterol or other sterols. The chain is StAR-related lipid transfer protein 5 (STARD5) from Homo sapiens (Human).